The sequence spans 150 residues: MGIQHEFDIIINGDIALRNLQLHKGDNYGCKLKIISNDYKKLKFRFIIRPDWSEIDEVKGLTVFANNYAVKVNKVDDTFYYVIYEAVIHLYNKKTEILIYSDDENELFKHYYPYISLNMISKKYKVKEENYSSPYIEHPLIPYRDYESMD.

The protein belongs to the orthopoxvirus OPG027 family.

In terms of biological role, inhibits antiviral activity induced by type I interferons. Does not block signal transduction of IFN, but is important to counteract the host antiviral state induced by a pre-treatment with IFN. The chain is Interferon antagonist OPG027 (OPG027) from Vaccinia virus (strain Ankara) (VACV).